The chain runs to 191 residues: Fe/S biogenesis protein NfuA (191 aa).

Positions 149 and 152 each coordinate [4Fe-4S] cluster.

This sequence belongs to the NfuA family. As to quaternary structure, homodimer. [4Fe-4S] cluster serves as cofactor.

Functionally, involved in iron-sulfur cluster biogenesis. Binds a 4Fe-4S cluster, can transfer this cluster to apoproteins, and thereby intervenes in the maturation of Fe/S proteins. Could also act as a scaffold/chaperone for damaged Fe/S proteins. The chain is Fe/S biogenesis protein NfuA from Yersinia enterocolitica serotype O:8 / biotype 1B (strain NCTC 13174 / 8081).